We begin with the raw amino-acid sequence, 930 residues long: Isoleucine--tRNA ligase (930 aa).

Positions Pro57 to His67 match the 'HIGH' region motif. Residue Glu554 coordinates L-isoleucyl-5'-AMP. A 'KMSKS' region motif is present at residues Lys595–Ser599. ATP is bound at residue Lys598. Zn(2+) is bound by residues Cys888, Cys891, Cys908, and Cys911.

The protein belongs to the class-I aminoacyl-tRNA synthetase family. IleS type 1 subfamily. As to quaternary structure, monomer. It depends on Zn(2+) as a cofactor.

Its subcellular location is the cytoplasm. It carries out the reaction tRNA(Ile) + L-isoleucine + ATP = L-isoleucyl-tRNA(Ile) + AMP + diphosphate. Catalyzes the attachment of isoleucine to tRNA(Ile). As IleRS can inadvertently accommodate and process structurally similar amino acids such as valine, to avoid such errors it has two additional distinct tRNA(Ile)-dependent editing activities. One activity is designated as 'pretransfer' editing and involves the hydrolysis of activated Val-AMP. The other activity is designated 'posttransfer' editing and involves deacylation of mischarged Val-tRNA(Ile). This Streptococcus pneumoniae serotype 4 (strain ATCC BAA-334 / TIGR4) protein is Isoleucine--tRNA ligase.